The chain runs to 353 residues: Endophilin-A3 (353 aa).

A membrane-binding amphipathic helix region spans residues 1–21 (MSVAGLKKQFHKASQLFSEKI). The 232-residue stretch at 18 to 249 (SEKISGAEGT…LQNRINVASS (232 aa)) folds into the BAR domain. The interval 60–87 (PNPAYRAKLGMLNTMSKIRGQVKTTGYP) is required for dimerization upon membrane association. Residues 180–201 (DEEVKQAVEKFEESKELAERSM) are a coiled coil. The interaction with ARC stretch occupies residues 218-254 (FVEAALDYHKQSTEILEDLQSKLQNRINVASSRPKRE). The 60-residue stretch at 291 to 350 (VDQPCCQALYDFEPENEGELGFKEGDIITLTNQIDENWYEGMLNGESGFFPHNYVEVMVP) folds into the SH3 domain.

This sequence belongs to the endophilin family. Interacts with ARC. Interacts with SYNJ1 and DNM1. Highest level in a region associated with endocytosis of yolk proteins in developing oocytes (at protein level). Highest level in small ovarian follicles. High levels in brain and testis. Lower level in adrenal glands.

The protein resides in the cytoplasm. It localises to the early endosome membrane. Its function is as follows. Implicated in endocytosis. May recruit other proteins to membranes with high curvature. Implicated in endocytosis of yolk proteins during oogenesis. This Gallus gallus (Chicken) protein is Endophilin-A3.